The following is a 457-amino-acid chain: ATP synthase subunit beta (457 aa).

147-154 is a binding site for ATP; the sequence is GGAGVGKT.

Belongs to the ATPase alpha/beta chains family. As to quaternary structure, F-type ATPases have 2 components, CF(1) - the catalytic core - and CF(0) - the membrane proton channel. CF(1) has five subunits: alpha(3), beta(3), gamma(1), delta(1), epsilon(1). CF(0) has three main subunits: a(1), b(2) and c(9-12). The alpha and beta chains form an alternating ring which encloses part of the gamma chain. CF(1) is attached to CF(0) by a central stalk formed by the gamma and epsilon chains, while a peripheral stalk is formed by the delta and b chains.

The protein resides in the cell inner membrane. The catalysed reaction is ATP + H2O + 4 H(+)(in) = ADP + phosphate + 5 H(+)(out). Its function is as follows. Produces ATP from ADP in the presence of a proton gradient across the membrane. The catalytic sites are hosted primarily by the beta subunits. This chain is ATP synthase subunit beta, found in Haemophilus influenzae (strain 86-028NP).